The chain runs to 239 residues: 2-C-methyl-D-erythritol 4-phosphate cytidylyltransferase (239 aa).

This sequence belongs to the IspD/TarI cytidylyltransferase family. IspD subfamily.

It catalyses the reaction 2-C-methyl-D-erythritol 4-phosphate + CTP + H(+) = 4-CDP-2-C-methyl-D-erythritol + diphosphate. The protein operates within isoprenoid biosynthesis; isopentenyl diphosphate biosynthesis via DXP pathway; isopentenyl diphosphate from 1-deoxy-D-xylulose 5-phosphate: step 2/6. Functionally, catalyzes the formation of 4-diphosphocytidyl-2-C-methyl-D-erythritol from CTP and 2-C-methyl-D-erythritol 4-phosphate (MEP). The chain is 2-C-methyl-D-erythritol 4-phosphate cytidylyltransferase from Ruthia magnifica subsp. Calyptogena magnifica.